We begin with the raw amino-acid sequence, 209 residues long: Large ribosomal subunit protein uL3 (209 aa).

Belongs to the universal ribosomal protein uL3 family. As to quaternary structure, part of the 50S ribosomal subunit. Forms a cluster with proteins L14 and L19.

One of the primary rRNA binding proteins, it binds directly near the 3'-end of the 23S rRNA, where it nucleates assembly of the 50S subunit. This chain is Large ribosomal subunit protein uL3, found in Pelobacter propionicus (strain DSM 2379 / NBRC 103807 / OttBd1).